The primary structure comprises 101 residues: Small ribosomal subunit protein uS14 (101 aa).

It belongs to the universal ribosomal protein uS14 family. Part of the 30S ribosomal subunit. Contacts proteins S3 and S10.

In terms of biological role, binds 16S rRNA, required for the assembly of 30S particles and may also be responsible for determining the conformation of the 16S rRNA at the A site. This Paramagnetospirillum magneticum (strain ATCC 700264 / AMB-1) (Magnetospirillum magneticum) protein is Small ribosomal subunit protein uS14.